Consider the following 437-residue polypeptide: Sonic hedgehog protein (437 aa).

A signal peptide spans Met1–Ala24. Cys25 carries N-palmitoyl cysteine lipidation. A Cardin-Weintraub motif is present at residues Lys33 to Lys39. Residues Glu90, Glu91, Asp96, Thr126, Glu127, Asp130, and Asp132 each coordinate Ca(2+). Zn(2+) is bound by residues His141, Asp148, and His183. Gly198 carries the Cholesterol glycine ester lipid modification. N-linked (GlcNAc...) asparagine glycosylation occurs at Asn279.

It belongs to the hedgehog family. Interacts with HHATL/GUP1 which negatively regulates HHAT-mediated palmitoylation of the SHH N-terminus. Interacts with BOC and CDON. Interacts with HHIP. Interacts with DISP1 via its cholesterol anchor. Interacts with SCUBE2. Interacts with glypican GPC3. As to quaternary structure, multimer. The C-terminal domain displays an autoproteolysis activity and a cholesterol transferase activity. Both activities result in the cleavage of the full-length protein and covalent attachment of a cholesterol moiety to the C-terminal of the newly generated N-terminal fragment (ShhN). Cholesterylation is required for the sonic hedgehog protein N-product targeting to lipid rafts and multimerization. ShhN is the active species in both local and long-range signaling, whereas the C-product (ShhC) is degraded in the endoplasmic reticulum. In terms of processing, N-palmitoylation by HHAT of ShhN is required for sonic hedgehog protein N-product multimerization and full activity. It is a prerequisite for the membrane-proximal positioning and the subsequent shedding of this N-terminal peptide. Post-translationally, the lipidated N- and C-terminal peptides of ShhNp can be cleaved (shedding). The N-terminal palmitoylated peptide is cleaved at the Cardin-Weintraub (CW) motif site. The cleavage reduced the interactions with heparan sulfate. The cleavage is enhanced by SCUBE2. Expressed in a number of embryonic tissues including the notochord, ventral neural tube, floor plate, lung bud, zone of polarizing activity and posterior distal mesenchyme of limbs. In the adult, expressed in lung and neural retina.

Its subcellular location is the endoplasmic reticulum membrane. The protein resides in the golgi apparatus membrane. The protein localises to the cell membrane. It carries out the reaction glycyl-L-cysteinyl-[protein] + cholesterol + H(+) = [protein]-C-terminal glycyl cholesterol ester + N-terminal L-cysteinyl-[protein]. The C-terminal part of the sonic hedgehog protein precursor displays an autoproteolysis and a cholesterol transferase activity. Both activities result in the cleavage of the full-length protein into two parts (ShhN and ShhC) followed by the covalent attachment of a cholesterol moiety to the C-terminal of the newly generated ShhN. Both activities occur in the reticulum endoplasmic. Once cleaved, ShhC is degraded in the endoplasmic reticulum. Functionally, the dually lipidated sonic hedgehog protein N-product (ShhNp) is a morphogen which is essential for a variety of patterning events during development. Induces ventral cell fate in the neural tube and somites. Involved in the patterning of the anterior-posterior axis of the developing limb bud. Essential for axon guidance. Binds to the patched (PTCH1) receptor, which functions in association with smoothened (SMO), to activate the transcription of target genes. In the absence of SHH, PTCH1 represses the constitutive signaling activity of SMO. This chain is Sonic hedgehog protein, found in Mus musculus (Mouse).